The following is a 328-amino-acid chain: DNA-directed RNA polymerase subunit alpha (328 aa).

The segment at 1–230 (MNKIKITPSV…QSQMEIFTND (230 aa)) is alpha N-terminal domain (alpha-NTD). An alpha C-terminal domain (alpha-CTD) region spans residues 243-328 (NSEIFYQPLD…ILKKIEQNKS (86 aa)).

This sequence belongs to the RNA polymerase alpha chain family. As to quaternary structure, homodimer. The RNAP catalytic core consists of 2 alpha, 1 beta, 1 beta' and 1 omega subunit. When a sigma factor is associated with the core the holoenzyme is formed, which can initiate transcription.

It catalyses the reaction RNA(n) + a ribonucleoside 5'-triphosphate = RNA(n+1) + diphosphate. DNA-dependent RNA polymerase catalyzes the transcription of DNA into RNA using the four ribonucleoside triphosphates as substrates. The sequence is that of DNA-directed RNA polymerase subunit alpha from Nitratiruptor sp. (strain SB155-2).